The primary structure comprises 280 residues: Shikimate dehydrogenase (NADP(+)) (280 aa).

Shikimate is bound by residues 18 to 20 and T65; that span reads SRS. The active-site Proton acceptor is K69. Positions 90 and 105 each coordinate shikimate. Residues 131–135, 154–159, and I219 each bind NADP(+); these read GAGGA and NRTRAR. Y221 contributes to the shikimate binding site. G242 serves as a coordination point for NADP(+).

The protein belongs to the shikimate dehydrogenase family. In terms of assembly, homodimer.

It carries out the reaction shikimate + NADP(+) = 3-dehydroshikimate + NADPH + H(+). It functions in the pathway metabolic intermediate biosynthesis; chorismate biosynthesis; chorismate from D-erythrose 4-phosphate and phosphoenolpyruvate: step 4/7. In terms of biological role, involved in the biosynthesis of the chorismate, which leads to the biosynthesis of aromatic amino acids. Catalyzes the reversible NADPH linked reduction of 3-dehydroshikimate (DHSA) to yield shikimate (SA). In Methylocella silvestris (strain DSM 15510 / CIP 108128 / LMG 27833 / NCIMB 13906 / BL2), this protein is Shikimate dehydrogenase (NADP(+)).